Here is a 921-residue protein sequence, read N- to C-terminus: Probable serine/threonine-protein kinase DDB_G0275165 (921 aa).

The 255-residue stretch at 23–277 (FDPLSIIGSG…SNILGLLEYI (255 aa)) folds into the Protein kinase domain. ATP-binding positions include 29–37 (IGSGGFGKV) and Lys-50. The active-site Proton acceptor is Asp-147. Disordered regions lie at residues 289–453 (DYEP…SFPR), 465–492 (RGEEEPLVVSQKDQLEHDLEGGDDNEED), 530–571 (RPWN…SDSN), 583–653 (NPTP…PTTI), 671–698 (STATAQPKSRSNSNPPKPTVVISNSNNN), 737–813 (IQPL…SRSL), 833–858 (SSQQSNLVHQPSSSSSSTKQPPTSQF), and 877–921 (FEKS…KPKK). Composition is skewed to low complexity over residues 310-352 (NNNN…NNNN), 400-412 (SNINGGVNNNNSN), and 429-445 (NINGCVNNNNNNSNNNN). Composition is skewed to low complexity over residues 539–550 (NNNNKNNNNNEK) and 583–638 (NPTP…SLSS). Residues 643 to 653 (PQSTYKVPTTI) show a composition bias toward polar residues. 3 stretches are compositionally biased toward low complexity: residues 748–775 (TVAATTATTPTTATSTTIKSSPTTPTST), 842–857 (QPSSSSSSTKQPPTSQ), and 892–910 (TSSSLTSNSNSSIPAPSSP).

Belongs to the protein kinase superfamily. TKL Ser/Thr protein kinase family.

It catalyses the reaction L-seryl-[protein] + ATP = O-phospho-L-seryl-[protein] + ADP + H(+). The enzyme catalyses L-threonyl-[protein] + ATP = O-phospho-L-threonyl-[protein] + ADP + H(+). This chain is Probable serine/threonine-protein kinase DDB_G0275165, found in Dictyostelium discoideum (Social amoeba).